Reading from the N-terminus, the 66-residue chain is Large ribosomal subunit protein bL33c (66 aa).

This sequence belongs to the bacterial ribosomal protein bL33 family.

It localises to the plastid. In Epifagus virginiana (Beechdrops), this protein is Large ribosomal subunit protein bL33c (rpl33).